The chain runs to 183 residues: Pyruvoyl-dependent arginine decarboxylase 2 (183 aa).

A Pyruvic acid (Ser) modification is found at S41.

The protein belongs to the PdaD family. The cofactor is pyruvate.

The catalysed reaction is L-arginine + H(+) = agmatine + CO2. The sequence is that of Pyruvoyl-dependent arginine decarboxylase 2 (pdaD2) from Methanosarcina mazei (strain ATCC BAA-159 / DSM 3647 / Goe1 / Go1 / JCM 11833 / OCM 88) (Methanosarcina frisia).